The primary structure comprises 192 residues: Ribose 1,5-bisphosphate phosphokinase PhnN (192 aa).

The protein belongs to the ribose 1,5-bisphosphokinase family.

It carries out the reaction alpha-D-ribose 1,5-bisphosphate + ATP = 5-phospho-alpha-D-ribose 1-diphosphate + ADP. Its pathway is metabolic intermediate biosynthesis; 5-phospho-alpha-D-ribose 1-diphosphate biosynthesis; 5-phospho-alpha-D-ribose 1-diphosphate from D-ribose 5-phosphate (route II): step 3/3. In terms of biological role, catalyzes the phosphorylation of ribose 1,5-bisphosphate to 5-phospho-D-ribosyl alpha-1-diphosphate (PRPP). The sequence is that of Ribose 1,5-bisphosphate phosphokinase PhnN from Achromobacter xylosoxidans (strain A8).